The primary structure comprises 193 residues: Acyl carrier protein phosphodiesterase (193 aa).

The protein belongs to the AcpH family.

It carries out the reaction holo-[ACP] + H2O = apo-[ACP] + (R)-4'-phosphopantetheine + H(+). Functionally, converts holo-ACP to apo-ACP by hydrolytic cleavage of the phosphopantetheine prosthetic group from ACP. This chain is Acyl carrier protein phosphodiesterase, found in Shigella boydii serotype 18 (strain CDC 3083-94 / BS512).